The chain runs to 185 residues: Large ribosomal subunit protein uL5 (185 aa).

Belongs to the universal ribosomal protein uL5 family. Part of the 50S ribosomal subunit; part of the 5S rRNA/L5/L18/L25 subcomplex. Contacts the 5S rRNA and the P site tRNA. Forms a bridge to the 30S subunit in the 70S ribosome.

This is one of the proteins that bind and probably mediate the attachment of the 5S RNA into the large ribosomal subunit, where it forms part of the central protuberance. In the 70S ribosome it contacts protein S13 of the 30S subunit (bridge B1b), connecting the 2 subunits; this bridge is implicated in subunit movement. Contacts the P site tRNA; the 5S rRNA and some of its associated proteins might help stabilize positioning of ribosome-bound tRNAs. This Magnetococcus marinus (strain ATCC BAA-1437 / JCM 17883 / MC-1) protein is Large ribosomal subunit protein uL5.